Reading from the N-terminus, the 208-residue chain is Ribosomal RNA large subunit methyltransferase E (208 aa).

Positions 62, 64, 82, 98, and 123 each coordinate S-adenosyl-L-methionine. The active-site Proton acceptor is the K163.

This sequence belongs to the class I-like SAM-binding methyltransferase superfamily. RNA methyltransferase RlmE family.

It localises to the cytoplasm. It carries out the reaction uridine(2552) in 23S rRNA + S-adenosyl-L-methionine = 2'-O-methyluridine(2552) in 23S rRNA + S-adenosyl-L-homocysteine + H(+). In terms of biological role, specifically methylates the uridine in position 2552 of 23S rRNA at the 2'-O position of the ribose in the fully assembled 50S ribosomal subunit. The sequence is that of Ribosomal RNA large subunit methyltransferase E from Actinobacillus succinogenes (strain ATCC 55618 / DSM 22257 / CCUG 43843 / 130Z).